A 243-amino-acid chain; its full sequence is Transmembrane protein 174 (243 aa).

The next 2 membrane-spanning stretches (helical) occupy residues 40-60 and 73-93; these read LLFSGIFLGLVGITFTVMGWI and LLGPVLLSVGVTFILIAVCKF.

As to quaternary structure, interacts with SLC34A1; regulates SLC34A1 internalization by PTH and FGF23.

The protein localises to the endoplasmic reticulum membrane. It is found in the apical cell membrane. Regulator of plasma phosphate homeostasis. Decreases serum inorganic phosphate (Pi) uptake by regulating the sodium-phosphate cotransporter SLC34A1 trafficking by PTH and FGF23 in the kidney. The polypeptide is Transmembrane protein 174 (TMEM174) (Pongo abelii (Sumatran orangutan)).